The primary structure comprises 465 residues: ATP synthase subunit beta (465 aa).

149-156 (GGAGVGKT) provides a ligand contact to ATP.

Belongs to the ATPase alpha/beta chains family. In terms of assembly, F-type ATPases have 2 components, CF(1) - the catalytic core - and CF(0) - the membrane proton channel. CF(1) has five subunits: alpha(3), beta(3), gamma(1), delta(1), epsilon(1). CF(0) has three main subunits: a(1), b(2) and c(9-12). The alpha and beta chains form an alternating ring which encloses part of the gamma chain. CF(1) is attached to CF(0) by a central stalk formed by the gamma and epsilon chains, while a peripheral stalk is formed by the delta and b chains.

Its subcellular location is the cell inner membrane. It carries out the reaction ATP + H2O + 4 H(+)(in) = ADP + phosphate + 5 H(+)(out). Its function is as follows. Produces ATP from ADP in the presence of a proton gradient across the membrane. The catalytic sites are hosted primarily by the beta subunits. This Dictyoglomus turgidum (strain DSM 6724 / Z-1310) protein is ATP synthase subunit beta.